The chain runs to 407 residues: Pleckstrin homology-like domain family A member 1 (407 aa).

Basic and acidic residues-rich tracts occupy residues 1 to 11 and 54 to 63; these read MRRTPAAERLS and RSAEDGREQP. Positions 1-67 are disordered; that stretch reads MRRTPAAERL…DGREQPAHGS (67 aa). The PH domain maps to 149 to 184; it reads SGCKALKEGVLEKRSDGLLQLWKKKCCILTEEGLLL. Disordered stretches follow at residues 188–224 and 296–407; these read KQVQ…EPPA and QQHL…SNSA. Composition is skewed to low complexity over residues 189-204 and 297-319; these read QVQH…QPGQ and QHLV…QPQI. Residues 312-348 form a 15 X 2 AA repeats of P-Q region; sequence PQPQQPQIQPQPQPQIQPQPQPQPQPQPQPQQQPQPQ. Positions 320–344 are enriched in pro residues; it reads QPQPQPQIQPQPQPQPQPQPQPQQQ. Positions 354–381 are 11 X 2 AA repeats of P-H; sequence PHPHPHLYPHPHPHAHSHPHPHPHPHPH. The segment covering 354–384 has biased composition (basic residues); the sequence is PHPHPHLYPHPHPHAHSHPHPHPHPHPHQLQ. Low complexity predominate over residues 385 to 395; that stretch reads HAHQPLHSQPQ.

As to quaternary structure, interacts with RPL14, EIF3S7 and PABPC4.

Its subcellular location is the cytoplasm. The protein localises to the cytoplasmic vesicle. It is found in the nucleus. It localises to the nucleolus. Seems to be involved in regulation of apoptosis. May be involved in detachment-mediated programmed cell death. May mediate apoptosis during neuronal development. May be involved in regulation of anti-apoptotic effects of IGF1. May be involved in translational regulation. The protein is Pleckstrin homology-like domain family A member 1 (Phlda1) of Rattus norvegicus (Rat).